The chain runs to 601 residues: Sodium-dependent phosphate transport protein 2C (601 aa).

The Cytoplasmic segment spans residues 1-75 (MPNSLAGDQV…HQVVSGFLKA (75 aa)). At Ser4 the chain carries Phosphoserine. The helical transmembrane segment at 76-96 (CGLLGSLYFFICSLDILSSAF) threads the bilayer. The Extracellular segment spans residues 97 to 110 (QLLGSKMAGDIFKD). Residues 111 to 131 (NVVLSNPVAGLVIGVVVTVLV) traverse the membrane as a helical segment. The Cytoplasmic segment spans residues 132-187 (QSSSTSSSIVVSMVASKSLTVQASVPIIMGVNVGTSITSTLVSMAQSGDRDEFQRA). Residues 188-208 (FGGSAVHGIFNWLTVLVLLPL) traverse the membrane as a helical segment. Residues 209–324 (ENATAALERL…FAGSELTDLA (116 aa)) lie on the Extracellular side of the membrane. N-linked (GlcNAc...) asparagine glycans are attached at residues Asn210, Asn264, Asn267, and Asn299. The cysteines at positions 275 and 311 are disulfide-linked. A helical transmembrane segment spans residues 325–345 (VGFILLAGSLLVLCVCLVLIV). The Cytoplasmic portion of the chain corresponds to 346-369 (KLLNSVLRGRIAQAVKTVINADFP). A helical membrane pass occupies residues 370-390 (FPFGWLSGYLAILVGAGLTFL). Residues 391–447 (LQSSSVFTAAIVPLMGVGVINLERAYPLFLGSNIGTTTTALLAALASPADTLLFAVQ) are Extracellular-facing. The chain crosses the membrane as a helical span at residues 448–468 (VALIHFFFNLAGILLWYLVPV). Residues 469–487 (LRLPIPLAKRFGDLTAQYR) are Cytoplasmic-facing. A helical transmembrane segment spans residues 488 to 508 (WVAIVYLLLTFLLLPLAAFGL). The Extracellular portion of the chain corresponds to 509–512 (SLAG). The helical transmembrane segment at 513–533 (GSVLAAVGGPLVGLVLLIILV) threads the bilayer. The Cytoplasmic portion of the chain corresponds to 534 to 601 (NVLQRHRPSW…NPQVIASQQL (68 aa)).

Belongs to the SLC34A transporter family. Highly expressed in the kidney. Not found in any of the other tested tissues.

The protein localises to the apical cell membrane. It carries out the reaction 2 Na(+)(out) + phosphate(out) = 2 Na(+)(in) + phosphate(in). Involved in actively transporting phosphate into cells via Na(+) cotransport in the renal brush border membrane. The cotransport has a Na(+):Pi stoichiometry of 2:1 and is electroneutral. In Rattus norvegicus (Rat), this protein is Sodium-dependent phosphate transport protein 2C (Slc34a3).